Consider the following 635-residue polypeptide: Threonine--tRNA ligase (635 aa).

In terms of domain architecture, TGS spans 1-61; that stretch reads MVSIRLPDGS…DHDVALAIVT (61 aa). The tract at residues 242–533 is catalytic; that stretch reads DHRKLGKQLD…LIEHHAGAMP (292 aa). Positions 333, 384, and 510 each coordinate Zn(2+).

The protein belongs to the class-II aminoacyl-tRNA synthetase family. Homodimer. It depends on Zn(2+) as a cofactor.

The protein resides in the cytoplasm. It catalyses the reaction tRNA(Thr) + L-threonine + ATP = L-threonyl-tRNA(Thr) + AMP + diphosphate + H(+). Catalyzes the attachment of threonine to tRNA(Thr) in a two-step reaction: L-threonine is first activated by ATP to form Thr-AMP and then transferred to the acceptor end of tRNA(Thr). Also edits incorrectly charged L-seryl-tRNA(Thr). In Paraburkholderia phymatum (strain DSM 17167 / CIP 108236 / LMG 21445 / STM815) (Burkholderia phymatum), this protein is Threonine--tRNA ligase.